A 163-amino-acid polypeptide reads, in one-letter code: MTSIAISSGSFDPITLGHLDIIKRGAKVFDEVYVVVLNNSSKKPFFSVEERLDLIREATKDIPNVKVDSHSGLLVEYAKMRNANAILRGLRAVSDFEYEMQITSMNRKLDENIETFFIMTNNQYSFLSSSIVKEVARYGGSVVDLVPPVVERALKEKFQTPLK.

Ser-10 is a substrate binding site. ATP is bound by residues Ser-10–Phe-11 and His-18. Residues Lys-42, Leu-74, and Arg-88 each coordinate substrate. ATP-binding positions include Gly-89–Arg-91, Glu-99, and Tyr-124–Ser-130.

This sequence belongs to the bacterial CoaD family. In terms of assembly, homohexamer. The cofactor is Mg(2+).

The protein resides in the cytoplasm. It catalyses the reaction (R)-4'-phosphopantetheine + ATP + H(+) = 3'-dephospho-CoA + diphosphate. The protein operates within cofactor biosynthesis; coenzyme A biosynthesis; CoA from (R)-pantothenate: step 4/5. In terms of biological role, reversibly transfers an adenylyl group from ATP to 4'-phosphopantetheine, yielding dephospho-CoA (dPCoA) and pyrophosphate. This is Phosphopantetheine adenylyltransferase from Bacillus anthracis (strain A0248).